Here is a 112-residue protein sequence, read N- to C-terminus: Nucleoid-associated protein FTN_1196 (112 aa).

The disordered stretch occupies residues 1-27 (MNFDMSKLMQQAQKMQEQMKKAQQERE). Over residues 17-27 (EQMKKAQQERE) the composition is skewed to basic and acidic residues.

Belongs to the YbaB/EbfC family. In terms of assembly, homodimer.

Its subcellular location is the cytoplasm. It is found in the nucleoid. In terms of biological role, binds to DNA and alters its conformation. May be involved in regulation of gene expression, nucleoid organization and DNA protection. The polypeptide is Nucleoid-associated protein FTN_1196 (Francisella tularensis subsp. novicida (strain U112)).